The sequence spans 513 residues: ATP synthase subunit alpha (513 aa).

169–176 (GDRQTGKT) contributes to the ATP binding site.

This sequence belongs to the ATPase alpha/beta chains family. F-type ATPases have 2 components, CF(1) - the catalytic core - and CF(0) - the membrane proton channel. CF(1) has five subunits: alpha(3), beta(3), gamma(1), delta(1), epsilon(1). CF(0) has three main subunits: a(1), b(2) and c(9-12). The alpha and beta chains form an alternating ring which encloses part of the gamma chain. CF(1) is attached to CF(0) by a central stalk formed by the gamma and epsilon chains, while a peripheral stalk is formed by the delta and b chains.

It localises to the cell inner membrane. The catalysed reaction is ATP + H2O + 4 H(+)(in) = ADP + phosphate + 5 H(+)(out). Its function is as follows. Produces ATP from ADP in the presence of a proton gradient across the membrane. The alpha chain is a regulatory subunit. This Shewanella sp. (strain ANA-3) protein is ATP synthase subunit alpha.